Reading from the N-terminus, the 274-residue chain is NH(3)-dependent NAD(+) synthetase (274 aa).

46–53 (GISGGQDS) lines the ATP pocket. Asp52 serves as a coordination point for Mg(2+). Deamido-NAD(+) is bound at residue Arg140. Residue Thr160 participates in ATP binding. Residue Glu165 participates in Mg(2+) binding. Deamido-NAD(+)-binding residues include Lys173 and Asp180. 2 residues coordinate ATP: Lys189 and Thr211. 260–261 (HK) provides a ligand contact to deamido-NAD(+).

The protein belongs to the NAD synthetase family. As to quaternary structure, homodimer.

The catalysed reaction is deamido-NAD(+) + NH4(+) + ATP = AMP + diphosphate + NAD(+) + H(+). It functions in the pathway cofactor biosynthesis; NAD(+) biosynthesis; NAD(+) from deamido-NAD(+) (ammonia route): step 1/1. Its function is as follows. Catalyzes the ATP-dependent amidation of deamido-NAD to form NAD. Uses ammonia as a nitrogen source. The polypeptide is NH(3)-dependent NAD(+) synthetase (Listeria innocua serovar 6a (strain ATCC BAA-680 / CLIP 11262)).